The sequence spans 352 residues: Replication-associated protein (352 aa).

One can recognise a CRESS-DNA virus Rep endonuclease domain in the interval 9 to 117; it reads QINAKNYFLT…DGDTLVWGEF (109 aa). The RCR-1 signature appears at 16–19; sequence FLTY. A divalent metal cation is bound by residues Glu-50, His-58, and His-60. The short motif at 58-60 is the RCR-2 element; the sequence is HLH. Tyr-104 functions as the For DNA cleavage activity in the catalytic mechanism. An RCR-3 motif is present at residues 104–107; it reads YIDK. Residue Asp-108 coordinates a divalent metal cation. The interval 144 to 154 is binding to RBR1; sequence KEEALQIIREK. Residues 157 to 177 form an oligomerization region; that stretch reads EKYLFQFHNLNSNLDRIFDKT. 223 to 230 provides a ligand contact to ATP; it reads GDSRTGKT.

This sequence belongs to the geminiviridae Rep protein family. Homooligomer. Interacts with the replication enhancer protein (REn). Interacts with host retinoblastoma-related protein 1 (RBR1), and may thereby induce the transcription of host replicative enzymes even if the cell is not dividing anymore. Interacts with host PCNA. Interacts with host SCE1 protein. Interacts with host GRIK1, GRIK2, GRIMP and histone H3. Mg(2+) is required as a cofactor. Requires Mn(2+) as cofactor.

Its subcellular location is the host nucleus. Functionally, essential for the replication of viral ssDNA. The closed circular ssDNA genome is first converted to a superhelical dsDNA. Rep binds a specific region at the genome origin of replication. It introduces an endonucleolytic nick within the conserved sequence 5'-TAATATTAC-3' in the intergenic region of the genome present in all geminiviruses, thereby initiating the rolling circle replication (RCR). Following cleavage, binds covalently to the 5'-phosphate of DNA as a tyrosyl ester. The cleavage gives rise to a free 3'-OH that serves as a primer for the cellular DNA polymerase. The polymerase synthesizes the (+) strand DNA by rolling circle mechanism. After one round of replication, a Rep-catalyzed nucleotidyl transfer reaction releases a circular single-stranded virus genome, thereby terminating the replication. Displays origin-specific DNA cleavage, nucleotidyl transferase, ATPase and helicase activities. The chain is Replication-associated protein from Solanum lycopersicum (Tomato).